A 921-amino-acid chain; its full sequence is Dual serine/threonine and tyrosine protein kinase (921 aa).

Positions 645 to 899 (PKLGRELGRG…PLLGIVEPSL (255 aa)) constitute a Protein kinase domain. Residues 651 to 659 (LGRGQYGVV) and Lys-674 contribute to the ATP site. Asp-770 acts as the Proton acceptor in catalysis.

This sequence belongs to the protein kinase superfamily. Ser/Thr protein kinase family.

It localises to the cytoplasm. It is found in the cell membrane. Its subcellular location is the apical cell membrane. The protein localises to the basolateral cell membrane. The protein resides in the cell junction. The enzyme catalyses L-seryl-[protein] + ATP = O-phospho-L-seryl-[protein] + ADP + H(+). It carries out the reaction L-threonyl-[protein] + ATP = O-phospho-L-threonyl-[protein] + ADP + H(+). It catalyses the reaction L-tyrosyl-[protein] + ATP = O-phospho-L-tyrosyl-[protein] + ADP + H(+). Its function is as follows. May act as a positive regulator of ERK phosphorylation downstream of fibroblast growth factor-receptor activation. May induce both caspase-dependent apoptosis and caspase-independent cell death. May play a role in the embryonic development. The polypeptide is Dual serine/threonine and tyrosine protein kinase (dstyk) (Takifugu rubripes (Japanese pufferfish)).